The primary structure comprises 416 residues: Cysteate synthase (416 aa).

Residue Lys104 is modified to N6-(pyridoxal phosphate)lysine. Pyridoxal 5'-phosphate is bound at residue Asn130.

Belongs to the threonine synthase family. Cysteate synthase subfamily. In terms of assembly, homotrimer. Pyridoxal 5'-phosphate serves as cofactor.

It carries out the reaction O-phospho-L-serine + sulfite + H(+) = L-cysteate + phosphate. The protein operates within cofactor biosynthesis; coenzyme M biosynthesis. In terms of biological role, specifically catalyzes the beta-elimination of phosphate from L-phosphoserine and the beta-addition of sulfite to the dehydroalanine intermediate to produce L-cysteate. The sequence is that of Cysteate synthase from Methanosarcina barkeri (strain Fusaro / DSM 804).